We begin with the raw amino-acid sequence, 65 residues long: Alpha-toxin Bs-Tx28 (65 aa).

One can recognise an LCN-type CS-alpha/beta domain in the interval 3–65 (RDAYIADDKN…VPIRIPGKCR (63 aa)). Cystine bridges form between Cys13–Cys64, Cys17–Cys37, Cys23–Cys47, and Cys27–Cys49. Arg65 carries the post-translational modification Arginine amide.

It belongs to the long (4 C-C) scorpion toxin superfamily. Sodium channel inhibitor family. Alpha subfamily. Expressed by the venom gland.

Its subcellular location is the secreted. Its function is as follows. Alpha toxins bind voltage-independently at site-3 of sodium channels (Nav) and inhibit the inactivation of the activated channels, thereby blocking neuronal transmission. This toxin inhibits the inactivation of activated TTX-sensitive sodium channels (Nav). This Hottentotta tamulus sindicus (Scorpion) protein is Alpha-toxin Bs-Tx28.